Here is a 1108-residue protein sequence, read N- to C-terminus: Activity-dependent neuroprotector homeobox protein (1108 aa).

The interval 1 to 685 (MFQLPVNNLG…ASTITLHLVH (685 aa)) is binds to beta-catenin/CTNNB1. Glycyl lysine isopeptide (Lys-Gly) (interchain with G-Cter in SUMO2) cross-links involve residues lysine 39 and lysine 72. The C2H2-type 1; degenerate zinc-finger motif lies at 74–97 (FCCSACPFSSKFFSAYKSHFRNVH). The residue at position 98 (serine 98) is a Phosphoserine. The C2H2-type 2; degenerate zinc finger occupies 107–129 (LNCPYCTFNADKKTLETHIKIFH). The interval 133-154 (SSAPSSSLSTFKDKNKNDGLKP) is disordered. A compositionally biased stretch (basic and acidic residues) spans 143–154 (FKDKNKNDGLKP). Residues lysine 144 and lysine 155 each participate in a glycyl lysine isopeptide (Lys-Gly) (interchain with G-Cter in SUMO2) cross-link. The segment at 165-188 (YYCKKCTYRDPLYEIVRKHIYREH) adopts a C2H2-type 3; degenerate zinc-finger fold. Residues lysine 203, lysine 231, lysine 266, lysine 274, lysine 278, lysine 279, lysine 311, and lysine 335 each participate in a glycyl lysine isopeptide (Lys-Gly) (interchain with G-Cter in SUMO2) cross-link. The C2H2-type 4; degenerate zinc-finger motif lies at 221–244 (IHCKRCLFMPKSYEALVQHVIEDH). Asymmetric dimethylarginine is present on arginine 348. A neuroprotective peptide; contributes to CTNNB1-binding, but less effective than whole N-terminal region region spans residues 354–361 (NAPVSIPQ). Residues 360-438 (PQQSQSVKQL…PAATGPPPSN (79 aa)) form a disordered region. Glycyl lysine isopeptide (Lys-Gly) (interchain with G-Cter in SUMO2) cross-links involve residues lysine 367 and lysine 407. Positions 393–422 (SLQTANTSLPPGQVKSPSVSQSQASRVLGQ) are enriched in polar residues. Phosphoserine occurs at positions 408 and 412. Lysine 426 is covalently cross-linked (Glycyl lysine isopeptide (Lys-Gly) (interchain with G-Cter in SUMO2)). The span at 426–437 (KPPPAATGPPPS) shows a compositional bias: pro residues. Residues 446–468 (KICTICNELFPENVYSVHFEKEH) form a C2H2-type 5; atypical zinc finger. C2H2-type zinc fingers lie at residues 488–509 (SKCLYCNRYLPTDTLLNHMLIH) and 511–534 (LSCPYCRSTFNDVEKMAAHMRMVH). Glycyl lysine isopeptide (Lys-Gly) (interchain with G-Cter in SUMO2) cross-links involve residues lysine 599 and lysine 605. Serine 607 is subject to Phosphoserine. Glycyl lysine isopeptide (Lys-Gly) (interchain with G-Cter in SUMO2) cross-links involve residues lysine 615, lysine 620, lysine 631, and lysine 657. Residues 621–646 (TLCPLCFSILKGPISDALAHHLRERH) form a C2H2-type 8; atypical zinc finger. The C2H2-type 9; atypical zinc finger occupies 661-685 (YKCIHCLGVYTSNMTASTITLHLVH). A disordered region spans residues 690-711 (GKTQNGQDKTNAPSRLNQSPGL). Polar residues predominate over residues 691–709 (KTQNGQDKTNAPSRLNQSP). Lysine 698 participates in a covalent cross-link: Glycyl lysine isopeptide (Lys-Gly) (interchain with G-Cter in SUMO2). The residue at position 708 (serine 708) is a Phosphoserine. Glycyl lysine isopeptide (Lys-Gly) (interchain with G-Cter in SUMO2) cross-links involve residues lysine 715, lysine 727, and lysine 730. Residue serine 737 is modified to Phosphoserine. Residue lysine 744 forms a Glycyl lysine isopeptide (Lys-Gly) (interchain with G-Cter in SUMO2) linkage. The homeobox DNA-binding region spans 753 to 813 (LDPKGHEDDS…SNKRKKCVRD (61 aa)). Serine 804 carries the phosphoserine modification. Glycyl lysine isopeptide (Lys-Gly) (interchain with G-Cter in SUMO2) cross-links involve residues lysine 806, lysine 828, and lysine 834. Residues 851–880 (KDSRVNASKTVDKKHNLGKEDDSFSDSFEH) are compositionally biased toward basic and acidic residues. The tract at residues 851 to 1037 (KDSRVNASKT…DTEQLKWKNS (187 aa)) is disordered. Phosphoserine occurs at positions 875, 877, 885, 888, and 904. Residues lysine 913, lysine 928, and lysine 941 each participate in a glycyl lysine isopeptide (Lys-Gly) (interchain with G-Cter in SUMO2) cross-link. The segment covering 928 to 938 (KEEEEEEEEED) has biased composition (acidic residues). The span at 939–959 (GSKYETIHLTEEPAKLMHDAS) shows a compositional bias: basic and acidic residues. Phosphoserine is present on residues serine 959 and serine 961. The segment covering 977 to 988 (PSESGPGSQQIS) has biased composition (polar residues). A Glycyl lysine isopeptide (Lys-Gly) (interchain with G-Cter in SUMO2) cross-link involves residue lysine 1022. 2 positions are modified to N6-acetyllysine; alternate: lysine 1041 and lysine 1048. Glycyl lysine isopeptide (Lys-Gly) (interchain with G-Cter in SUMO2); alternate cross-links involve residues lysine 1041 and lysine 1048. Residues 1050-1108 (QSQWENASENAERLPNPQIEWQNSTIDSEDGEQFDSMTDGVADPMHGSLTGVKLSSQQA) are disordered. Serine 1077 is subject to Phosphoserine.

As to quaternary structure, interacts (via N-terminal region) with beta-catenin/CTNNB1 (via the central armadillo domains); interaction is direct and stabilizes CTNNB1 by modulating its phosphorylation by glycogen synthase kinase-3 beta GSK3B. In terms of tissue distribution, expressed in the brain, with a higher expression in cerebellum and hippocampus. Weakly expressed in lung, kidney and intestine, and expressed at intermediate level in testis.

It is found in the nucleus. The protein localises to the chromosome. Its function is as follows. May be involved in transcriptional regulation. May mediate some of the neuroprotective peptide VIP-associated effects involving normal growth and cancer proliferation. Positively modulates WNT-beta-catenin/CTNN1B signaling, acting by regulating phosphorylation of, and thereby stabilizing, CTNNB1. May be required for neural induction and neuronal differentiation. May be involved in erythroid differentiation. This is Activity-dependent neuroprotector homeobox protein (Adnp) from Mus musculus (Mouse).